A 402-amino-acid chain; its full sequence is tRNA pseudouridine synthase Pus10 (402 aa).

The THUMP domain occupies 37–159 (RLRGERLVEK…QIRVHVQINP (123 aa)). The Nucleophile role is filled by aspartate 228. The substrate site is built by tyrosine 296 and tyrosine 364.

Belongs to the pseudouridine synthase Pus10 family.

The enzyme catalyses uridine(54) in tRNA = pseudouridine(54) in tRNA. It catalyses the reaction uridine(55) in tRNA = pseudouridine(55) in tRNA. In terms of biological role, responsible for synthesis of pseudouridine from uracil-54 and uracil-55 in the psi GC loop of transfer RNAs. This is tRNA pseudouridine synthase Pus10 from Methanothermobacter marburgensis (strain ATCC BAA-927 / DSM 2133 / JCM 14651 / NBRC 100331 / OCM 82 / Marburg) (Methanobacterium thermoautotrophicum).